The sequence spans 501 residues: Dye-decolorizing peroxidase (501 aa).

A signal peptide spans 1–21; it reads MRLSPSFLSLALVIFVGEVVA. A propeptide spanning residues 22–60 is cleaved from the precursor; sequence RNVVARASNPASVTGTRKVSLLKNVAGLPAVPTAQQVAV. D228 serves as the catalytic Proton acceptor. An N-linked (GlcNAc...) asparagine glycan is attached at N352. Heme is bound at residue H367. An N-linked (GlcNAc...) asparagine glycan is attached at N403.

It belongs to the DyP-type peroxidase family. Heme b is required as a cofactor.

The protein localises to the secreted. The enzyme catalyses Reactive Blue 5 + 2 H2O2 = 2,2'-disulfonyl azobenzene + 3-[(4-amino-6-chloro-1,3,5-triazin-2-yl)amino]benzenesulfonate + phthalate + 2 H2O + 2 H(+). It catalyses the reaction 2 a phenolic donor + H2O2 = 2 a phenolic radical donor + 2 H2O. Manganese-independent peroxidase that is able to convert a large number of compounds, but its physiological substrate is not known. In addition to classic peroxidase substrates (e.g. 2,6-dimethoxyphenol), oxidizes dyes such as Reactive Blue 5 and Reactive Black 5. The protein is Dye-decolorizing peroxidase of Exidia glandulosa (Black witch's butter).